The primary structure comprises 999 residues: Collagen alpha-1(I) chain (999 aa).

Positions 1-999 (SYGYDEKSAG…PGPPGPPGPP (999 aa)) are disordered. Lysine 7 is subject to Allysine. Serine 8 is subject to Phosphoserine. A 4-hydroxyproline mark is found at proline 27, proline 30, proline 33, proline 42, proline 45, proline 48, proline 62, proline 77, proline 83, proline 92, and proline 98. The span at 65–79 (NGDDGEAGKPGRPGE) shows a compositional bias: basic and acidic residues. Lysine 101 is modified (5-hydroxylysine; alternate). O-linked (Gal...) hydroxylysine; alternate glycosylation occurs at lysine 101. The residue at position 107 (serine 107) is a Phosphoserine. A compositionally biased stretch (low complexity) spans 115–131 (DAGPAGPKGEPGSPGEN). 4-hydroxyproline occurs at positions 125, 128, 134, 143, 149, 170, 179, 182, 209, 212, 224, 230, 239, 245, 248, and 263. Residues 149–167 (PGASGPAGARGNDGATGAA) are compositionally biased toward low complexity. The span at 169–181 (PPGPTGPAGPPGF) shows a compositional bias: pro residues. A compositionally biased stretch (low complexity) spans 215 to 254 (AGAAGPAGNPGADGQPGAKGANGAPGIAGAPGFPGARGPS). Position 266 is a 5-hydroxylysine (lysine 266). A 4-hydroxyproline mark is found at proline 272, proline 275, proline 287, proline 296, proline 311, proline 317, proline 326, and proline 332. A compositionally biased stretch (gly residues) spans 321–330 (GERGGPGSRG). The residue at position 341 (lysine 341) is a 5-hydroxylysine. 4-hydroxyproline occurs at positions 350, 359, 365, 371, 380, 383, 392, 401, 407, 419, 429, 432, 450, 468, 474, 480, 486, 492, 498, 510, 526, 532, 538, and 547. Residues 374–400 (KGLTGSPGSPGPDGKTGPPGPAGQDGR) show a composition bias toward low complexity. Low complexity predominate over residues 462–489 (QGPAGSPGFQGLPGPAGPPGEAGKPGEQ). Low complexity predominate over residues 522–535 (APGAPGSQGAPGLQ). The residue at position 559 (lysine 559) is a 5-hydroxylysine. Residues proline 565, proline 580, and proline 586 each carry the 4-hydroxyproline modification. The span at 592–606 (SGPSGPAGPTGARGA) shows a compositional bias: low complexity. Serine 595 carries the phosphoserine modification. 4-hydroxyproline is present on residues proline 607, proline 613, proline 616, proline 625, proline 631, proline 649, proline 658, and proline 667. Residues 619-646 (AGFAGPPGADGQPGAKGEPGDAGAKGDA) are compositionally biased toward low complexity. Pro residues predominate over residues 648 to 660 (PPGPAGPTGPPGP). Lysine 670 is modified (5-hydroxylysine). Over residues 675–691 (SAGPPGATGFPGAAGRV) the composition is skewed to low complexity. 4-hydroxyproline occurs at positions 679 and 685. Residue proline 693 is modified to 3-hydroxyproline. 4-hydroxyproline occurs at positions 694, 703, 706, 727, 736, 745, 754, 772, 781, 784, 790, 805, 811, 817, 826, and 832. A compositionally biased stretch (low complexity) spans 720–729 (ETGPAGRPGE). The span at 739–754 (SGEKGSPGADGPAGAP) shows a compositional bias: low complexity. Pro residues predominate over residues 804 to 814 (PPGPVGPPGLA). A compositionally biased stretch (low complexity) spans 816-831 (PPGESGREGSPGAEGS). Residue lysine 841 is modified to 5-hydroxylysine. Over residues 849–864 (PGPPGAPGAPGAPGPV) the composition is skewed to pro residues. A 4-hydroxyproline mark is found at proline 852, proline 855, and proline 858. The segment covering 885–899 (AGPAGARGPAGPQGP) has biased composition (low complexity). Over residues 900–914 (RGDKGETGEQGDRGI) the composition is skewed to basic and acidic residues. A 5-hydroxylysine modification is found at lysine 903. A 5-hydroxylysine; alternate modification is found at lysine 915. O-linked (Gal...) hydroxylysine; alternate glycosylation is present at lysine 915. Proline 930, proline 933, proline 951, and proline 966 each carry 4-hydroxyproline. The segment covering 933–966 (PGEQGPSGASGPAGPRGPPGSAGSPGKDGLNGLP) has biased composition (low complexity). Proline 971 bears the 3-hydroxyproline mark. Proline 972 is subject to 4-hydroxyproline. The segment covering 984 to 999 (VGPPGPPGPPGPPGPP) has biased composition (pro residues). Proline 986 carries the post-translational modification 3-hydroxyproline. 4-hydroxyproline is present on proline 987. 3-hydroxyproline is present on proline 989. Proline 990 bears the 4-hydroxyproline mark. 3-hydroxyproline is present on proline 992. Proline 993, proline 996, and proline 999 each carry 4-hydroxyproline.

The protein belongs to the fibrillar collagen family. Trimers of one alpha 2(I) and two alpha 1(I) chains. Post-translationally, contains mostly 4-hydroxyproline. Proline residues at the third position of the tripeptide repeating unit (G-X-Y) are hydroxylated in some or all of the chains. Contains 3-hydroxyproline at a few sites. This modification occurs on the first proline residue in the sequence motif Gly-Pro-Hyp, where Hyp is 4-hydroxyproline. In terms of processing, lysine residues at the third position of the tripeptide repeating unit (G-X-Y) are 5-hydroxylated in some or all of the chains. Post-translationally, O-glycosylated on hydroxylated lysine residues. The O-linked glycan consists of a Glc-Gal disaccharide. Expressed in bones.

It is found in the secreted. The protein resides in the extracellular space. It localises to the extracellular matrix. Type I collagen is a member of group I collagen (fibrillar forming collagen). In Choloepus hoffmanni (Hoffmann's two-fingered sloth), this protein is Collagen alpha-1(I) chain.